The following is a 374-amino-acid chain: NADH-quinone oxidoreductase subunit D 1 (374 aa).

Belongs to the complex I 49 kDa subunit family. NDH-1 is composed of 14 different subunits. Subunits NuoB, C, D, E, F, and G constitute the peripheral sector of the complex.

The protein localises to the cell membrane. It carries out the reaction a quinone + NADH + 5 H(+)(in) = a quinol + NAD(+) + 4 H(+)(out). In terms of biological role, NDH-1 shuttles electrons from NADH, via FMN and iron-sulfur (Fe-S) centers, to quinones in the respiratory chain. The immediate electron acceptor for the enzyme in this species is believed to be ubiquinone. Couples the redox reaction to proton translocation (for every two electrons transferred, four hydrogen ions are translocated across the cytoplasmic membrane), and thus conserves the redox energy in a proton gradient. In Roseiflexus sp. (strain RS-1), this protein is NADH-quinone oxidoreductase subunit D 1.